Here is a 927-residue protein sequence, read N- to C-terminus: Ribosome-releasing factor 2, mitochondrial (927 aa).

The N-terminal 57 residues, 1-57 (MVTAPLLGWVAVRPIPRLSKLNTCKYVSSSLQSYKRSVGSCLGKQQSRDFSYSATLT), are a transit peptide targeting the mitochondrion. The 316-residue stretch at 64-379 (EKTRNIGIIA…AVNNLLPGPS (316 aa)) folds into the tr-type G domain. GTP is bound by residues 73 to 80 (AHIDAGKT), 163 to 167 (DTPGH), and 217 to 220 (NKLD).

It belongs to the TRAFAC class translation factor GTPase superfamily. Classic translation factor GTPase family. EF-G/EF-2 subfamily.

The protein localises to the mitochondrion. Functionally, mitochondrial GTPase that mediates the disassembly of ribosomes from messenger RNA at the termination of mitochondrial protein biosynthesis. Not involved in the GTP-dependent ribosomal translocation step during translation elongation. This chain is Ribosome-releasing factor 2, mitochondrial (mef2), found in Talaromyces marneffei (strain ATCC 18224 / CBS 334.59 / QM 7333) (Penicillium marneffei).